The following is an 846-amino-acid chain: MGIQGLLQFIKEASEPIHVRKYKGQVVAVDTYCWLHKGAIACAEKLAKGEPTDRYVGFCMKFVNMLLSHGIKPILVFDGCTLPSKKEVERSRRERRQANLLKGKQLLREGKVSEARECFTRSINITHAMAHKVIKAARSQGVDCLVAPYEADAQLAYLNKAGIVQAIITEDSDLLAFGCKKVILKMDQFGNGLEIDQARLGMCRQLGDVFTEEKFRYMCILSGCDYLSSLRGIGLAKACKVLRLANNPDIVKVIKKIGHYLKMNITVPEDYINGFIRANNTFLYQLVFDPIKRKLIPLNAYEDDVDPETLSYAGQYVDDSIALQIALGNKDINTFEQIDDYNPDTAMPAHSRSHSWDDKTCQKSANVSSIWHRNYSPRPESGTVSDAPQLKENPSTVGVERVISTKGLNLPRKSSIVKRPRSAELSEDDLLSQYSLSFTKKTKKNSSEGNKSLSFSEVFVPDLVNGPTNKKSVSTPPRTRNKFATFLQRKNEESGAVVVPGTRSRFFCSSDSTDCVSNKVSIQPLDETAVTDKENNLHESEYGDQEGKRLVDTDVARNSSDDIPNNHIPGDHIPDKATVFTDEESYSFESSKFTRTISPPTLGTLRSCFSWSGGLGDFSRTPSPSPSTALQQFRRKSDSPTSLPENNMSDVSQLKSEESSDDESHPLREEACSSQSQESGEFSLQSSNASKLSQCSSKDSDSEESDCNIKLLDSQSDQTSKLRLSHFSKKDTPLRNKVPGLYKSSSADSLSTTKIKPLGPARASGLSKKPASIQKRKHHNAENKPGLQIKLNELWKNFGFKKDSEKLPPCKKPLSPVRDNIQLTPEAEEDIFNKPECGRVQRAIFQ.

The tract at residues 1–99 is N-domain; it reads MGIQGLLQFI…RSRRERRQAN (99 aa). Mg(2+) contacts are provided by D30, D78, E150, D152, D171, D173, D225, and D270. The interaction with MSH3 stretch occupies residues 129 to 387; it reads MAHKVIKAAR…RPESGTVSDA (259 aa). Positions 138-229 are I-domain; sequence RSQGVDCLVA…ILSGCDYLSS (92 aa). The interval 372 to 396 is disordered; it reads HRNYSPRPESGTVSDAPQLKENPST. S376 bears the Phosphoserine mark. Positions 382–396 are enriched in polar residues; the sequence is GTVSDAPQLKENPST. Residues 388 to 490 are interaction with MLH1; that stretch reads PQLKENPSTV…NKFATFLQRK (103 aa). The Nuclear localization signal motif lies at 418–421; that stretch reads KRPR. 2 positions are modified to phosphoserine: S422 and S454. K482 is modified (N6-acetyllysine). At T581 the chain carries Phosphothreonine. Phosphoserine is present on residues S598 and S610. The tract at residues 600–846 is interaction with MSH2; that stretch reads PTLGTLRSCF…CGRVQRAIFQ (247 aa). The disordered stretch occupies residues 618–781; it reads FSRTPSPSPS…SIQKRKHHNA (164 aa). Composition is skewed to polar residues over residues 620 to 631 and 639 to 654; these read RTPSPSPSTALQ and SPTS…VSQL. At T621 the chain carries Phosphothreonine. Phosphoserine occurs at positions 623, 639, 660, and 674. The span at 655 to 671 shows a compositional bias: basic and acidic residues; the sequence is KSEESSDDESHPLREEA. Composition is skewed to polar residues over residues 672 to 689, 713 to 722, and 743 to 754; these read CSSQ…SSNA, DSQSDQTSKL, and KSSSADSLSTTK. A Phosphoserine; by ATR modification is found at S714. A Phosphoserine modification is found at S746. Residues 787–846 form an interaction with MLH1 region; that stretch reads LQIKLNELWKNFGFKKDSEKLPPCKKPLSPVRDNIQLTPEAEEDIFNKPECGRVQRAIFQ.

Belongs to the XPG/RAD2 endonuclease family. EXO1 subfamily. As to quaternary structure, interacts with the MLH1-PMS2 heterodimer via MLH1. Interacts with MSH3. Interacts with the MSH2-MSH6 heterodimer via MSH2, and this interaction may increase the processivity of the 5'-&gt;3' exonuclease activity. Interacts with PCNA, and this interaction may both stimulate the cryptic 3'-&gt;5' exonuclease activity and suppress the 5'-&gt;3' exonuclease activity. Interacts with WRN, and this interaction stimulates both the 5'-&gt;3' exonuclease activity and cleavage of 5'-overhanging flap structures. Interacts with RECQL/RECQ1, and this interaction stimulates cleavage of 5'-overhanging flap structures. Interacts with DNA helicase ZGRF1; the interaction is increased following DNA damage induction. Mg(2+) serves as cofactor. In terms of processing, phosphorylated upon DNA damage and in response to agents stalling DNA replication, probably by ATM or ATR. Phosphorylation at Ser-454, Thr-621 and Ser-714 is induced upon DNA-damage caused by treatment with hydroxyurea (HU) but not upon IR treatment. The HU-induced EXO1 triple phosphorylation facilitates destabilization/degradation of the protein. Highly expressed in bone marrow, testis and thymus. Expressed at lower levels in colon, lymph nodes, ovary, placenta, prostate, small intestine, spleen and stomach.

The protein localises to the nucleus. 5'-&gt;3' double-stranded DNA exonuclease which may also possess a cryptic 3'-&gt;5' double-stranded DNA exonuclease activity. Functions in DNA mismatch repair (MMR) to excise mismatch-containing DNA tracts directed by strand breaks located either 5' or 3' to the mismatch. Also exhibits endonuclease activity against 5'-overhanging flap structures similar to those generated by displacement synthesis when DNA polymerase encounters the 5'-end of a downstream Okazaki fragment. Required for somatic hypermutation (SHM) and class switch recombination (CSR) of immunoglobulin genes. Essential for male and female meiosis. In Homo sapiens (Human), this protein is Exonuclease 1 (EXO1).